The following is a 273-amino-acid chain: Inactive endochitinase At2g43600 (273 aa).

The first 22 residues, 1-22 (MTIKNVIFSLFILAILAETVFS), serve as a signal peptide directing secretion. One can recognise a Chitin-binding type-1 domain in the interval 23–61 (QNCMDTSCPGLKECCSRWGFCGTKDEYCGFFCFSGPCNI). 4 disulfide bridges follow: Cys-25-Cys-37, Cys-30-Cys-43, Cys-36-Cys-50, and Cys-54-Cys-59. The catalytic stretch occupies residues 78 to 273 (GKIETVITSA…GVTPDQGLDC (196 aa)). The N-linked (GlcNAc...) asparagine glycan is linked to Asn-99.

This sequence belongs to the glycosyl hydrolase 19 family. Chitinase class I subfamily.

The polypeptide is Inactive endochitinase At2g43600 (Arabidopsis thaliana (Mouse-ear cress)).